A 580-amino-acid polypeptide reads, in one-letter code: DBIRD complex subunit ZNF326 (580 aa).

Residues 1 to 124 (MDFEDDYVHS…YRNSLDSFGG (124 aa)) are mediates transcriptional activation. 12 positions are modified to phosphoserine: Ser48, Ser56, Ser63, Ser69, Ser81, Ser82, Ser91, Ser106, Ser114, Ser118, Ser121, and Ser137. Lys140 is covalently cross-linked (Glycyl lysine isopeptide (Lys-Gly) (interchain with G-Cter in SUMO2)). A disordered region spans residues 156-196 (SYSSFSSPHMKPAPVGSRGRGTPAYPESTFGSRSYDAFGGP). An Omega-N-methylarginine modification is found at Arg173. Ser212 bears the Phosphoserine mark. Residue Arg235 is modified to Omega-N-methylarginine. The short motif at 238–260 (KRKMMQIFIKPGGAFIKKPKLAK) is the Bipartite nuclear localization signal element. Lys240 participates in a covalent cross-link: Glycyl lysine isopeptide (Lys-Gly) (interchain with G-Cter in SUMO2). Position 247 is an N6-acetyllysine; alternate (Lys247). Lys247 is covalently cross-linked (Glycyl lysine isopeptide (Lys-Gly) (interchain with G-Cter in SUMO2); alternate). Residues Lys254 and Lys264 each participate in a glycyl lysine isopeptide (Lys-Gly) (interchain with G-Cter in SUMO2) cross-link. Residues 256 to 302 (PKLAKPMDKMNLSKSPTKTDPKNEEEEKRRIEARREKQRRRREKNSE) are disordered. A Phosphoserine modification is found at Ser270. A compositionally biased stretch (basic and acidic residues) spans 272-290 (TKTDPKNEEEEKRRIEARR). The segment at 314-336 (CSFCKFRTFEEKDIELHLESSSH) adopts a C2H2 AKAP95-type 1 zinc-finger fold. Lys401 participates in a covalent cross-link: Glycyl lysine isopeptide (Lys-Gly) (interchain with G-Cter in SUMO2). The C2H2 AKAP95-type 2 zinc-finger motif lies at 407–430 (CSACSVYIPALHSSVQLHLKSPDH). Glycyl lysine isopeptide (Lys-Gly) (interchain with G-Cter in SUMO2) cross-links involve residues Lys459 and Lys467. A disordered region spans residues 470–580 (NPFEIQDHPQ…ATEQCEHRQM (111 aa)). Over residues 483–529 (IEGDEEDEEKIDEPIEEEEEEEEEEEEEGEEAGSVEEEGDVEGEEGT) the composition is skewed to acidic residues. Over residues 530–539 (AEAAAAGEAD) the composition is skewed to low complexity. Acidic residues predominate over residues 540–562 (AVGEAEGAGEAEEAEEEEEEEGT).

It belongs to the AKAP95 family. As to quaternary structure, component of the DBIRD complex. Interacts with CCAR2; the interaction is direct. As to expression, ubiquitously expressed in adult tissues. Highly expressed in neuronal tissues such as brain and neural tube.

The protein resides in the nucleus matrix. In terms of biological role, core component of the DBIRD complex, a multiprotein complex that acts at the interface between core mRNP particles and RNA polymerase II (RNAPII) and integrates transcript elongation with the regulation of alternative splicing: the DBIRD complex affects local transcript elongation rates and alternative splicing of a large set of exons embedded in (A + T)-rich DNA regions. May also play a role in neuronal differentiation. Able to bind DNA and activate expression in vitro. The chain is DBIRD complex subunit ZNF326 (Znf326) from Mus musculus (Mouse).